Consider the following 368-residue polypeptide: Glucose 1-dehydrogenase 2 (368 aa).

Cysteine 41 provides a ligand contact to Zn(2+). Threonine 43 is a binding site for substrate. The Zn(2+) site is built by histidine 68 and glutamate 69. Position 91 (asparagine 91) interacts with substrate. Cysteine 95, cysteine 98, cysteine 101, cysteine 109, and glutamine 152 together coordinate Zn(2+). Residues glutamine 152 and aspartate 156 each contribute to the substrate site. NADP(+) contacts are provided by residues 213–215 (NRR), 279–281 (FGF), 307–309 (LDN), and lysine 356. Position 309 (asparagine 309) interacts with substrate.

It belongs to the zinc-containing alcohol dehydrogenase family. Glucose 1-dehydrogenase subfamily. The cofactor is Zn(2+).

The catalysed reaction is D-glucose + NAD(+) = D-glucono-1,5-lactone + NADH + H(+). It catalyses the reaction D-glucose + NADP(+) = D-glucono-1,5-lactone + NADPH + H(+). In terms of biological role, catalyzes the NAD(P)(+)-dependent oxidation of D-glucose to D-gluconate via gluconolactone. Can utilize both NAD(+) and NADP(+) as electron acceptor. Is involved in the degradation of glucose through a non-phosphorylative variant of the Entner-Doudoroff pathway. In Saccharolobus solfataricus (strain ATCC 35092 / DSM 1617 / JCM 11322 / P2) (Sulfolobus solfataricus), this protein is Glucose 1-dehydrogenase 2.